Reading from the N-terminus, the 513-residue chain is ATP synthase subunit alpha (513 aa).

169–176 (GDRQTGKS) contributes to the ATP binding site.

The protein belongs to the ATPase alpha/beta chains family. F-type ATPases have 2 components, CF(1) - the catalytic core - and CF(0) - the membrane proton channel. CF(1) has five subunits: alpha(3), beta(3), gamma(1), delta(1), epsilon(1). CF(0) has three main subunits: a(1), b(2) and c(9-12). The alpha and beta chains form an alternating ring which encloses part of the gamma chain. CF(1) is attached to CF(0) by a central stalk formed by the gamma and epsilon chains, while a peripheral stalk is formed by the delta and b chains.

It localises to the cell membrane. It catalyses the reaction ATP + H2O + 4 H(+)(in) = ADP + phosphate + 5 H(+)(out). Functionally, produces ATP from ADP in the presence of a proton gradient across the membrane. The alpha chain is a regulatory subunit. This Baumannia cicadellinicola subsp. Homalodisca coagulata protein is ATP synthase subunit alpha.